A 911-amino-acid chain; its full sequence is Protein translocase subunit SecA (911 aa).

ATP is bound by residues Gln87, 105–109, and Asp512; that span reads GEGKT. Residues 861-880 are disordered; it reads APGLGSEQLSEEGAEVAVAS. Positions 895, 897, 906, and 907 each coordinate Zn(2+).

Belongs to the SecA family. Monomer and homodimer. Part of the essential Sec protein translocation apparatus which comprises SecA, SecYEG and auxiliary proteins SecDF-YajC and YidC. It depends on Zn(2+) as a cofactor.

It localises to the cell inner membrane. The protein resides in the cytoplasm. It carries out the reaction ATP + H2O + cellular proteinSide 1 = ADP + phosphate + cellular proteinSide 2.. Part of the Sec protein translocase complex. Interacts with the SecYEG preprotein conducting channel. Has a central role in coupling the hydrolysis of ATP to the transfer of proteins into and across the cell membrane, serving both as a receptor for the preprotein-SecB complex and as an ATP-driven molecular motor driving the stepwise translocation of polypeptide chains across the membrane. The sequence is that of Protein translocase subunit SecA from Pseudomonas putida (strain ATCC 47054 / DSM 6125 / CFBP 8728 / NCIMB 11950 / KT2440).